A 306-amino-acid polypeptide reads, in one-letter code: Probable histidinol-phosphatase (306 aa).

It belongs to the PHP hydrolase family. HisK subfamily.

The enzyme catalyses L-histidinol phosphate + H2O = L-histidinol + phosphate. It participates in amino-acid biosynthesis; L-histidine biosynthesis; L-histidine from 5-phospho-alpha-D-ribose 1-diphosphate: step 8/9. This Schizosaccharomyces pombe (strain 972 / ATCC 24843) (Fission yeast) protein is Probable histidinol-phosphatase.